Here is a 320-residue protein sequence, read N- to C-terminus: uncharacterized protein (320 aa).

7 helical membrane passes run 107–127 (LSKE…AGIY), 131–151 (VALL…IALS), 169–189 (LIAE…YLPI), 200–220 (ITLD…GSLS), 228–248 (IAVG…FGLL), 260–280 (ALIL…VIFS), and 299–319 (TLYA…LIIY).

Its subcellular location is the cell membrane. This is an uncharacterized protein from Methanocaldococcus jannaschii (strain ATCC 43067 / DSM 2661 / JAL-1 / JCM 10045 / NBRC 100440) (Methanococcus jannaschii).